The primary structure comprises 716 residues: Forkhead box protein P2 (716 aa).

The span at 1 to 28 (MMQESATETISNSSMNQNGMSTLSSQLD) shows a compositional bias: polar residues. Disordered regions lie at residues 1-45 (MMQE…SEVS) and 286-340 (KHGG…TGAS). A compositionally biased stretch (low complexity) spans 293–306 (TTNNSSSTTSSTTS). Residues 316–325 (SIVNGQSSVL) are compositionally biased toward polar residues. Residues 327 to 338 (ARRDSSSHEETG) show a composition bias toward basic and acidic residues. Residues 347–372 (GVCKWPGCESICEDFGQFLKHLNNEH) form a C2H2-type zinc finger. The leucine-zipper stretch occupies residues 389–410 (VQQLEIQLSKERERLQAMMTHL). Residues 423-427 (PLNLV) form a CTBP1-binding region. Residues 439 to 460 (TSPQSLPQTPTTPTAPVTPITQ) show a composition bias toward low complexity. The disordered stretch occupies residues 439 to 466 (TSPQSLPQTPTTPTAPVTPITQGPSVIT). Residues 505 to 595 (RPPFTYATLI…SQKITGSPTL (91 aa)) constitute a DNA-binding region (fork-head). 2 disordered regions span residues 650–669 (LDHIDSNGNSSPGCSPQPHI) and 679–716 (VIAEDEDCPMSLVTTANHSPELEDDREIEEEPLSEDLE). Positions 700 to 716 (LEDDREIEEEPLSEDLE) are enriched in acidic residues.

In terms of assembly, forms homodimers and heterodimers with FOXP1 and FOXP4. Dimerization is required for DNA-binding. Interacts with CTBP1. Interacts with FOXP1. Interacts with TBR1. Interacts with ZMYM2.

Its subcellular location is the nucleus. In terms of biological role, transcriptional repressor that may play a role in the specification and differentiation of lung epithelium. May also play a role in developing neural, gastrointestinal and cardiovascular tissues. Can act with CTBP1 to synergistically repress transcription but CTPBP1 is not essential. Plays a role in synapse formation by regulating SRPX2 levels. This is Forkhead box protein P2 (FOXP2) from Pan paniscus (Pygmy chimpanzee).